The sequence spans 218 residues: Thiamine-phosphate synthase (218 aa).

4-amino-2-methyl-5-(diphosphooxymethyl)pyrimidine contacts are provided by residues 36-40 (QVRSK) and Asp-70. Asp-71 and Asp-94 together coordinate Mg(2+). Thr-113 serves as a coordination point for 4-amino-2-methyl-5-(diphosphooxymethyl)pyrimidine. Residue 141-143 (TPT) coordinates 2-[(2R,5Z)-2-carboxy-4-methylthiazol-5(2H)-ylidene]ethyl phosphate. A 4-amino-2-methyl-5-(diphosphooxymethyl)pyrimidine-binding site is contributed by Lys-144.

Belongs to the thiamine-phosphate synthase family. Mg(2+) is required as a cofactor.

It catalyses the reaction 2-[(2R,5Z)-2-carboxy-4-methylthiazol-5(2H)-ylidene]ethyl phosphate + 4-amino-2-methyl-5-(diphosphooxymethyl)pyrimidine + 2 H(+) = thiamine phosphate + CO2 + diphosphate. The catalysed reaction is 2-(2-carboxy-4-methylthiazol-5-yl)ethyl phosphate + 4-amino-2-methyl-5-(diphosphooxymethyl)pyrimidine + 2 H(+) = thiamine phosphate + CO2 + diphosphate. It carries out the reaction 4-methyl-5-(2-phosphooxyethyl)-thiazole + 4-amino-2-methyl-5-(diphosphooxymethyl)pyrimidine + H(+) = thiamine phosphate + diphosphate. The protein operates within cofactor biosynthesis; thiamine diphosphate biosynthesis; thiamine phosphate from 4-amino-2-methyl-5-diphosphomethylpyrimidine and 4-methyl-5-(2-phosphoethyl)-thiazole: step 1/1. Condenses 4-methyl-5-(beta-hydroxyethyl)thiazole monophosphate (THZ-P) and 2-methyl-4-amino-5-hydroxymethyl pyrimidine pyrophosphate (HMP-PP) to form thiamine monophosphate (TMP). The sequence is that of Thiamine-phosphate synthase from Corynebacterium jeikeium (strain K411).